A 353-amino-acid chain; its full sequence is Stomatin-like protein 2, mitochondrial (353 aa).

A mitochondrion-targeting transit peptide spans Met1–Ala28. Position 17 is a phosphoserine; by PKC/PRKCZ (Ser17). Tyr124 is subject to Phosphotyrosine. N6-acetyllysine; alternate is present on Lys145. Lys145 is subject to N6-succinyllysine; alternate. Residues Ile215–Lys252 adopt a coiled-coil conformation. Residue Lys233 is modified to N6-acetyllysine. The interval Val324–Ser353 is disordered. Ser330 carries the phosphoserine modification.

The protein belongs to the band 7/mec-2 family. In terms of assembly, forms homooligomers. Interacts with MFN2; may form heterooligomers. Interacts with PHB1 and PHB2; recruits them to cardiolipin-enriched mitochondrial membranes and stabilizes them. Interacts with CACNA2D2.

The protein localises to the cell membrane. Its subcellular location is the mitochondrion. It is found in the mitochondrion inner membrane. The protein resides in the mitochondrion intermembrane space. It localises to the membrane raft. The protein localises to the cytoplasm. Its subcellular location is the cytoskeleton. Mitochondrial protein that probably regulates the biogenesis and the activity of mitochondria. Stimulates cardiolipin biosynthesis, binds cardiolipin-enriched membranes where it recruits and stabilizes some proteins including prohibitin and may therefore act in the organization of functional microdomains in mitochondrial membranes. Through regulation of the mitochondrial function may play a role into several biological processes including cell migration, cell proliferation, T-cell activation, calcium homeostasis and cellular response to stress. May play a role in calcium homeostasis through negative regulation of calcium efflux from mitochondria. Required for mitochondrial hyperfusion a pro-survival cellular response to stress which results in increased ATP production by mitochondria. May also regulate the organization of functional domains at the plasma membrane and play a role in T-cell activation through association with the T-cell receptor signaling complex and its regulation. The polypeptide is Stomatin-like protein 2, mitochondrial (Stoml2) (Rattus norvegicus (Rat)).